We begin with the raw amino-acid sequence, 361 residues long: Free fatty acid receptor 4 (361 aa).

Residues Met-1–Thr-45 are Extracellular-facing. Residue Asn-21 is glycosylated (N-linked (GlcNAc...) asparagine). The chain crosses the membrane as a helical span at residues Val-46–Ala-66. Over Arg-67–Leu-77 the chain is Cytoplasmic. The helical transmembrane segment at Val-78–Val-98 threads the bilayer. At Arg-99–His-112 the chain is on the extracellular side. The cysteines at positions 111 and 194 are disulfide-linked. A helical transmembrane segment spans residues Leu-113–Ser-133. The Cytoplasmic segment spans residues Leu-134–Ala-156. Residues Val-157–Phe-177 form a helical membrane-spanning segment. Over Arg-178–Glu-204 the chain is Extracellular. Residues Ile-205–Ile-225 form a helical membrane-spanning segment. Residues Ser-226–Leu-268 lie on the Cytoplasmic side of the membrane. A helical transmembrane segment spans residues Leu-269–Ile-289. At Gln-290–Asp-295 the chain is on the extracellular side. A helical transmembrane segment spans residues Leu-296–Leu-316. The Cytoplasmic segment spans residues Asn-317–Gly-361. Thr-347 and Thr-349 each carry phosphothreonine. A phosphoserine mark is found at Ser-350, Ser-357, and Ser-360.

Belongs to the G-protein coupled receptor 1 family. Interacts (via C-terminus) with ARRB2 following LCFAs stimulation. Post-translationally, phosphorylated at two clusters of Ser and Thr residues located in the intracellular C-terminus, a prerequisite for FFAR4 internalization via an ARRB2-dependent pathway. In terms of tissue distribution, the predominant isoform in human tissues. Expressed in adipose tissue, pancreatic islets, lung and brain. Expressed in alpha cells of pancreatic islets. Expressed in primary cilia of perivascular preadipocytes of white adipose tissue (at protein level). Abundant expression in the intestinal tract. Expressed in colonic intraepithelial neuroendocrine cells.

The protein localises to the cell membrane. It localises to the endosome membrane. The protein resides in the lysosome membrane. It is found in the cell projection. Its subcellular location is the cilium membrane. Functionally, G-protein-coupled receptor for long-chain fatty acids (LCFAs) with a major role in adipogenesis, energy metabolism and inflammation. Signals via G-protein and beta-arrestin pathways. LCFAs sensing initiates activation of phosphoinositidase C-linked G proteins GNAQ and GNA11 (G(q)/G(11)), inducing a variety of cellular responses via second messenger pathways such as intracellular calcium mobilization, modulation of cyclic adenosine monophosphate (cAMP) production, and mitogen-activated protein kinases (MAPKs). After LCFAs binding, associates with beta-arrestin ARRB2 that acts as an adapter protein coupling the receptor to specific downstream signaling pathways, as well as mediating receptor endocytosis. In response to dietary fats, plays an important role in the regulation of adipocyte proliferation and differentiation. Acts as a receptor for omega-3 polyunsaturated fatty acids (PUFAs) at primary cilium of perivascular preadipocytes, initiating an adipogenic program via cAMP and CTCF-dependent chromatin remodeling that ultimately results in transcriptional activation of adipogenic genes and cell cycle entry. Induces differentiation of brown adipocytes probably via autocrine and endocrine functions of FGF21 hormone. Activates brown adipocytes by initiating intracellular calcium signaling that leads to mitochondrial depolarization and fission, and overall increased mitochondrial respiration. Consequently stimulates fatty acid uptake and oxidation in mitochondria together with UCP1-mediated thermogenic respiration, eventually reducing fat mass. Regulates bi-potential differentiation of bone marrow mesenchymal stem cells toward osteoblasts or adipocytes likely by up-regulating distinct integrins. In response to dietary fats regulates hormone secretion and appetite. Stimulates GIP and GLP1 secretion from enteroendocrine cells as well as GCG secretion in pancreatic alpha cells, thereby playing a role in the regulation of blood glucose levels. Negatively regulates glucose-induced SST secretion in pancreatic delta cells. Mediates LCFAs inhibition of GHRL secretion, an appetite-controlling hormone. In taste buds, contributes to sensing of dietary fatty acids by the gustatory system. During the inflammatory response, promotes anti-inflammatory M2 macrophage differentiation in adipose tissue. Mediates the anti-inflammatory effects of omega-3 PUFAs via inhibition of NLRP3 inflammasome activation. In this pathway, interacts with adapter protein ARRB2 and inhibits the priming step triggered by Toll-like receptors (TLRs) at the level of TAK1 and TAB1. Further inhibits the activation step when ARRB2 directly associates with NLRP3, leading to inhibition of pro-inflammatory cytokine release. Mediates LCFAs anti-apoptotic effects. Its function is as follows. Receptor for LCFAs decoupled from G-protein signaling. May signal through beta-arrestin pathway. After LCFAs binding, associates with beta-arrestin ARRB2 that may act as an adapter protein coupling the receptor to specific downstream signaling pathways, as well as mediating receptor endocytosis. This Homo sapiens (Human) protein is Free fatty acid receptor 4.